A 529-amino-acid chain; its full sequence is Delayed-rectifier potassium channel regulatory subunit KCNS1 (529 aa).

At 1–217 the chain is on the cytoplasmic side; it reads MLMLLVRGTR…LTMENPGYSL (217 aa). Residues 218–239 form a helical membrane-spanning segment; sequence PSKLFSCVSISVVLASIAAMCI. The Extracellular portion of the chain corresponds to 240–270; that stretch reads HSLPEYQAREAAAAVAAVAAGRSAEGVRDDP. The chain crosses the membrane as a helical span at residues 271–293; the sequence is VLRRLEYFCIAWFSFEVSSRLLL. Topologically, residues 294–304 are cytoplasmic; that stretch reads APSTRNFFCHP. A helical transmembrane segment spans residues 305-322; the sequence is LNLIDIVSVLPFYLTLLA. At 323-340 the chain is on the extracellular side; the sequence is GAALGDHGGTGGKEFGHL. The helical; Voltage-sensor transmembrane segment at 341 to 361 threads the bilayer; the sequence is GKVVQVFRLMRIFRVLKLARH. Residues 362-376 are Cytoplasmic-facing; sequence STGLRSLGATLKHSY. A helical membrane pass occupies residues 377-398; it reads REVGILLLYLAVGVSVFSGVAY. Residues 399-411 lie on the Extracellular side of the membrane; the sequence is TAEKEEHVGFDTI. The helical intramembrane region spans 412-423; it reads PACWWWGTVSMT. Residues 424-429 carry the Selectivity filter motif; it reads TVGYGD. The stretch at 424–431 is an intramembrane region; that stretch reads TVGYGDVV. Residues 432–438 lie on the Extracellular side of the membrane; that stretch reads PVTVAGK. The chain crosses the membrane as a helical span at residues 439–467; the sequence is LAASGCILGGILVVALPITIIFNKFSHFY. The Cytoplasmic segment spans residues 468–529; the sequence is RRQKALEAAV…PSEPPHSQMY (62 aa). The disordered stretch occupies residues 494–529; sequence GVSEASLETSRETSQEGRSADLETQVPSEPPHSQMY. Basic and acidic residues predominate over residues 502–514; that stretch reads TSRETSQEGRSAD.

Belongs to the potassium channel family. S (TC 1.A.1.2) subfamily. Kv9.1/KCNS1 sub-subfamily. Heterotetramer with KCNB1. Heterotetramer with KCNB2. Does not form homomultimers.

It localises to the cell membrane. Its function is as follows. Potassium channel regulatory subunit that modulate the delayed rectifier voltage-gated potassium channel activity of KCNB1 and KCNB2 by altering their kinetics, expression levels, and shifting the half-inactivation potential to more polarized values. While it does not form functional channels on its own, it can form functional heterotetrameric channels with KCNB1 and KCNB2. Each regulatory subunit has unique regulatory properties that can lead to extensive inhibition, significant changes in kinetics, and/or substantial shifts in the voltage dependencies of the inactivation process. The polypeptide is Delayed-rectifier potassium channel regulatory subunit KCNS1 (Aotus nancymaae (Ma's night monkey)).